We begin with the raw amino-acid sequence, 290 residues long: Tubulin polyglutamylase complex subunit 1 (290 aa).

Residues 1-30 (MAAVEKRRQAVPPPAGFTDSGRQSVSRAAG) form a disordered region. Phosphoserine is present on residues Ser34 and Ser266.

In terms of assembly, part of the neuronal tubulin polyglutamylase complex which contains TPGS1, TPGS2, TTLL1, LRRC49 and NICN1. Interacts with PCM1, CSTPP1 and LRRC49.

It is found in the cytoplasm. It localises to the cytoskeleton. The protein resides in the cilium axoneme. Its subcellular location is the flagellum axoneme. The protein localises to the cilium basal body. It is found in the flagellum basal body. It localises to the cell projection. The protein resides in the axon. Its subcellular location is the dendrite. The protein localises to the microtubule organizing center. It is found in the centrosome. It localises to the centriolar satellite. Functionally, subunit of the tubulin polyglutamylase complex (TPGC). The complex mediates cilia and flagella polyglutamylation which is essential for their biogenesis and motility. May act in the targeting of the tubulin polyglutamylase complex. Required for the development of the spermatid flagellum. This Homo sapiens (Human) protein is Tubulin polyglutamylase complex subunit 1.